The primary structure comprises 661 residues: Peroxisomal acyl-coenzyme A oxidase 1 (661 aa).

S26 carries the phosphoserine modification. K65 is subject to N6-acetyllysine. An N6-succinyllysine modification is found at K89. T139 is a binding site for FAD. The residue at position 159 (K159) is an N6-succinyllysine. G178 serves as a coordination point for FAD. K216 bears the N6-acetyllysine mark. N6-succinyllysine is present on K241. Residues K255, K267, and K272 each carry the N6-acetyllysine modification. Residue K349 is modified to N6-succinyllysine. Catalysis depends on E421, which acts as the Proton acceptor. 2 positions are modified to N6-acetyllysine; alternate: K437 and K446. Residues K437 and K446 each carry the N6-succinyllysine; alternate modification. An N6-acetyllysine modification is found at K500. At K512 the chain carries N6-acetyllysine; alternate. K512 carries the post-translational modification N6-succinyllysine; alternate. An N6-succinyllysine modification is found at K542. An N6-acetyllysine; alternate modification is found at K637. Residue K637 is modified to N6-succinyllysine; alternate. K643 carries the N6-succinyllysine modification. Phosphoserine is present on S649. K652 is subject to N6-acetyllysine. K655 carries the N6-succinyllysine modification. The short motif at 659-661 (SKL) is the Microbody targeting signal element.

The protein belongs to the acyl-CoA oxidase family. Homodimer. Interacts with LONP2. The cofactor is FAD.

It is found in the peroxisome. It catalyses the reaction a 2,3-saturated acyl-CoA + O2 = a (2E)-enoyl-CoA + H2O2. The catalysed reaction is hexadecanoyl-CoA + O2 = (2E)-hexadecenoyl-CoA + H2O2. It carries out the reaction dodecanoyl-CoA + O2 = (2E)-dodecenoyl-CoA + H2O2. The enzyme catalyses octanoyl-CoA + O2 = (2E)-octenoyl-CoA + H2O2. It catalyses the reaction decanoyl-CoA + O2 = (2E)-decenoyl-CoA + H2O2. The catalysed reaction is tetradecanoyl-CoA + O2 = (2E)-tetradecenoyl-CoA + H2O2. It carries out the reaction hexadecanedioyl-CoA + O2 = (2E)-hexadecenedioyl-CoA + H2O2. The enzyme catalyses tetracosanoyl-CoA + O2 = (2E)-tetracosenoyl-CoA + H2O2. It catalyses the reaction glutaryl-CoA + O2 = (2E)-glutaconyl-CoA + H2O2. The catalysed reaction is hexanoyl-CoA + O2 = (2E)-hexenoyl-CoA + H2O2. It carries out the reaction octadecanoyl-CoA + O2 = (2E)-octadecenoyl-CoA + H2O2. The enzyme catalyses (5Z,8Z,11Z,14Z,17Z)-eicosapentaenoyl-CoA + O2 = (2E,5Z,8Z,11Z,14Z,17Z)-icosahexaenoyl-CoA + H2O2. It catalyses the reaction (6Z,9Z,12Z,15Z,18Z,21Z)-tetracosahexaenoyl-CoA + O2 = (2E,6Z,9Z,12Z,15Z,18Z,21Z)-tetracosaheptaenoyl-CoA + H2O2. Its pathway is lipid metabolism; peroxisomal fatty acid beta-oxidation. Functionally, involved in the initial and rate-limiting step of peroxisomal beta-oxidation of straight-chain saturated and unsaturated very-long-chain fatty acids. Catalyzes the desaturation of fatty acyl-CoAs such as palmitoyl-CoA (hexadecanoyl-CoA) to 2-trans-enoyl-CoAs ((2E)-enoyl-CoAs) such as (2E)-hexadecenoyl-CoA, and donates electrons directly to molecular oxygen (O(2)), thereby producing hydrogen peroxide (H(2)O(2)). In Cavia porcellus (Guinea pig), this protein is Peroxisomal acyl-coenzyme A oxidase 1.